The sequence spans 202 residues: Thymidylate kinase (202 aa).

Position 7-14 (7-14 (GIDGSGKT)) interacts with ATP.

This sequence belongs to the thymidylate kinase family.

The catalysed reaction is dTMP + ATP = dTDP + ADP. In terms of biological role, phosphorylation of dTMP to form dTDP in both de novo and salvage pathways of dTTP synthesis. In Ehrlichia ruminantium (strain Gardel), this protein is Thymidylate kinase.